The following is a 385-amino-acid chain: Methylthioribose-1-phosphate isomerase (385 aa).

The active-site Proton donor is Asp256.

The protein belongs to the eIF-2B alpha/beta/delta subunits family. MtnA subfamily.

It is found in the cytoplasm. Its subcellular location is the nucleus. It carries out the reaction 5-(methylsulfanyl)-alpha-D-ribose 1-phosphate = 5-(methylsulfanyl)-D-ribulose 1-phosphate. It participates in amino-acid biosynthesis; L-methionine biosynthesis via salvage pathway; L-methionine from S-methyl-5-thio-alpha-D-ribose 1-phosphate: step 1/6. In terms of biological role, catalyzes the interconversion of methylthioribose-1-phosphate (MTR-1-P) into methylthioribulose-1-phosphate (MTRu-1-P). This chain is Methylthioribose-1-phosphate isomerase, found in Arthroderma otae (strain ATCC MYA-4605 / CBS 113480) (Microsporum canis).